A 1074-amino-acid polypeptide reads, in one-letter code: DNA double-strand break repair Rad50 ATPase (1074 aa).

Residues Arg-12, 32 to 38 (NGSGKSS), and Gln-142 each bind ATP. Coiled-coil stretches lie at residues 355 to 402 (ELEK…REKA) and 452 to 506 (NLVE…KGLG). Residues 512 to 611 (LENLEDFSEL…KITRLKDAKK (100 aa)) enclose the Zinc-hook domain. Positions 559 and 562 each coordinate Zn(2+). 4 coiled-coil regions span residues 574-611 (TAEE…DAKK), 649-678 (LKLE…LQVQ), 749-823 (KEKL…EILE), and 865-895 (TEEK…LKAL). Residue 973 to 978 (LLSGGE) participates in ATP binding.

The protein belongs to the SMC family. RAD50 subfamily. Homodimer. Forms a heterotetramer composed of two Mre11 subunits and two Rad50 subunits. It depends on Zn(2+) as a cofactor.

In terms of biological role, part of the Rad50/Mre11 complex, which is involved in the early steps of DNA double-strand break (DSB) repair. The complex may facilitate opening of the processed DNA ends to aid in the recruitment of HerA and NurA. Rad50 controls the balance between DNA end bridging and DNA resection via ATP-dependent structural rearrangements of the Rad50/Mre11 complex. This is DNA double-strand break repair Rad50 ATPase from Methanosarcina acetivorans (strain ATCC 35395 / DSM 2834 / JCM 12185 / C2A).